The primary structure comprises 285 residues: MIAASGPTPLVATTQRTLAGTAQWSGVGLHSGQWVALTLQPAAANTGRQFVRLDLEGQPVIPARIEAVKSTQLATELVANGASVRTVEHLLAALAIAGIDNVTIQITGPEVPVLDGSAQPWLEGIQRVGVVPQEAPRPAVILKEPVTIYEGEAFVSAIPAPELRLTYGIDFPYRAIGRQWCSFTPSELATEVAPARTFGFAEQVDYLRSQGLIQGGSLENALVCSASGWVNPPLRFADEPVRHKLLDLWGDLALLGTPPIAHYVAYRASHHLHTQLARAIAQQRV.

Zn(2+)-binding residues include His-89, His-243, and Asp-247. Catalysis depends on His-270, which acts as the Proton donor.

The protein belongs to the LpxC family. The cofactor is Zn(2+).

The enzyme catalyses a UDP-3-O-[(3R)-3-hydroxyacyl]-N-acetyl-alpha-D-glucosamine + H2O = a UDP-3-O-[(3R)-3-hydroxyacyl]-alpha-D-glucosamine + acetate. It participates in glycolipid biosynthesis; lipid IV(A) biosynthesis; lipid IV(A) from (3R)-3-hydroxytetradecanoyl-[acyl-carrier-protein] and UDP-N-acetyl-alpha-D-glucosamine: step 2/6. In terms of biological role, catalyzes the hydrolysis of UDP-3-O-myristoyl-N-acetylglucosamine to form UDP-3-O-myristoylglucosamine and acetate, the committed step in lipid A biosynthesis. The polypeptide is UDP-3-O-acyl-N-acetylglucosamine deacetylase (Thermosynechococcus vestitus (strain NIES-2133 / IAM M-273 / BP-1)).